The primary structure comprises 227 residues: Probable septum site-determining protein MinC (227 aa).

Belongs to the MinC family. In terms of assembly, interacts with MinD and FtsZ.

Functionally, cell division inhibitor that blocks the formation of polar Z ring septums. Rapidly oscillates between the poles of the cell to destabilize FtsZ filaments that have formed before they mature into polar Z rings. Prevents FtsZ polymerization. This chain is Probable septum site-determining protein MinC, found in Acetivibrio thermocellus (strain ATCC 27405 / DSM 1237 / JCM 9322 / NBRC 103400 / NCIMB 10682 / NRRL B-4536 / VPI 7372) (Clostridium thermocellum).